An 86-amino-acid chain; its full sequence is F(1)-ATPase inhibitor STF1, mitochondrial (86 aa).

A mitochondrion-targeting transit peptide spans methionine 1–tyrosine 23. At serine 24 the chain carries Phosphoserine.

Belongs to the ATPase inhibitor family. Monomer and homodimer. Monomeric at pH 5.0 and dimeric at either pH 6.5 or 8.0. The protein aggregates increasingly strongly with increasing pH.

It localises to the mitochondrion. Functionally, endogenous low-affinity ATPase inhibitor, which inhibits specifically the reverse ATPase reaction of mitochondrial F(1)F(0)-type ATP synthase. Found to stabilize, together with STF2, a complex of intrinsic ATPase inhibitor INH1 and proton-translocating ATPase in mitochondrial membranes. Binds directly to purified F1-ATPase. The sequence is that of F(1)-ATPase inhibitor STF1, mitochondrial (STF1) from Saccharomyces cerevisiae (strain ATCC 204508 / S288c) (Baker's yeast).